We begin with the raw amino-acid sequence, 1249 residues long: Clustered mitochondria protein homolog (1249 aa).

The tract at residues 1–32 is disordered; that stretch reads MAQTNGELEHSKETPEQLTNGNHPEETQEEDN. The region spanning 318-562 is the Clu domain; that stretch reads DITRSQENYL…RVTPLDVMWQ (245 aa). A compositionally biased stretch (basic and acidic residues) spans 605 to 628; sequence KAEADAAKAESSEATESKEQASEE. 2 disordered regions span residues 605–636 and 868–903; these read KAEADAAKAESSEATESKEQASEEKSEEDQER and KAPATNGANGVAQEEGKNKKKKKGGDSSSPARAAKE. TPR repeat units lie at residues 974–1007, 1016–1049, and 1058–1091; these read AKLYHQLSMLYYQTDEKEAAVELARKAVIVTERT, ILSYLNLSLFEHASGNTKTALAYIKHAMDLWKII, and ITTMNNAAVMLQHLKQYSDSRKWFEASLEVCESL. Positions 1174–1249 are disordered; it reads NMNPRSLGTK…KLRGSKKSSA (76 aa). Polar residues predominate over residues 1176–1190; sequence NPRSLGTKIQPQVGQ.

This sequence belongs to the CLU family. May associate with the eukaryotic translation initiation factor 3 (eIF-3) complex.

It is found in the cytoplasm. MRNA-binding protein involved in proper cytoplasmic distribution of mitochondria. This Aspergillus niger (strain ATCC MYA-4892 / CBS 513.88 / FGSC A1513) protein is Clustered mitochondria protein homolog.